We begin with the raw amino-acid sequence, 392 residues long: Frizzled-9 (392 aa).

Topologically, residues 1-35 (ACDNPEKFQYVEKSLSCAPRCSPGVDVYWSREDKD) are extracellular. The helical transmembrane segment at 36–56 (FAFVWMAVWSTLCFVSTAFTV) threads the bilayer. Topologically, residues 57–72 (LTFLLDPHRFQYPERP) are cytoplasmic. Residues 73 to 93 (IIFLSMCYNVYSVAFIIRSVA) traverse the membrane as a helical segment. Over 94-119 (GAETIACDRENGELYIIQEGLESTGC) the chain is Extracellular. A helical transmembrane segment spans residues 120–140 (TIVFLILYYFGMASSLWWVVL). Residues 141–161 (TLTWFLAAGKKWGHEAIEAHS) lie on the Cytoplasmic side of the membrane. The chain crosses the membrane as a helical span at residues 162–182 (SYFHMAAWGIPAMKTIVILTM). At 183–206 (RKVAGDELTGLCYVGSMDVSALTG) the chain is on the extracellular side. Residues 207–227 (FVLIPLSCYLVVGTSFILTGF) form a helical membrane-spanning segment. At 228–253 (VALFHIRKIMKTGGTNTEKLEKLMVK) the chain is on the cytoplasmic side. A helical transmembrane segment spans residues 254–274 (IGVFSILYTVPATCVIVCYFY). At 275-312 (ERLNVDYWNLRALERACVPLPGRRAADCSLEASVPTVA) the chain is on the extracellular side. Residues 313–333 (VFMLKIFMSLVVGITSGVWVW) form a helical membrane-spanning segment. At 334 to 392 (SSKTLQTWQSLCNRKLGVRTRGKPCSGVSCGGVHCHYKAPTVMLHMTKTDPYLDNPTHV) the chain is on the cytoplasmic side. The short motif at 336–341 (KTLQTW) is the Lys-Thr-X-X-X-Trp motif, mediates interaction with the PDZ domain of Dvl family members element. The PDZ-binding signature appears at 390-392 (THV).

It belongs to the G-protein coupled receptor Fz/Smo family.

Its subcellular location is the cell membrane. In terms of biological role, receptor for WNT2 that is coupled to the beta-catenin canonical signaling pathway, which leads to the activation of disheveled proteins, inhibition of GSK-3 kinase, nuclear accumulation of beta-catenin and activation of Wnt target genes. The sequence is that of Frizzled-9 (FZD9) from Gallus gallus (Chicken).